The chain runs to 69 residues: MANNNSGNSNNLLVPGAAQAIDQMKLEIASEFGVNLGADTTSRANGSVGGEITKRLVSFAQQNMGGGQF.

The protein belongs to the alpha/beta-type SASP family.

Functionally, SASP are bound to spore DNA. They are double-stranded DNA-binding proteins that cause DNA to change to an a-like conformation. They protect the DNA backbone from chemical and enzymatic cleavage and are thus involved in dormant spore's high resistance to UV light. This is Small, acid-soluble spore protein A (sspA) from Bacillus subtilis (strain 168).